The following is a 385-amino-acid chain: Leucine aminopeptidase 1 (385 aa).

A signal peptide spans 1-14 (MKFLTLALSATATA). Residues 15–85 (MIIVNPEQQP…YGTLHTTRVV (71 aa)) constitute a propeptide that is removed on maturation. Positions 185, 204, 243, and 270 each coordinate Zn(2+). The cysteines at positions 319 and 323 are disulfide-linked. Zn(2+) is bound at residue histidine 352.

This sequence belongs to the peptidase M28 family. M28E subfamily. As to quaternary structure, monomer. Zn(2+) is required as a cofactor.

It localises to the secreted. Its function is as follows. Extracellular aminopeptidase that allows assimilation of proteinaceous substrates. The polypeptide is Leucine aminopeptidase 1 (lap1) (Penicillium rubens (strain ATCC 28089 / DSM 1075 / NRRL 1951 / Wisconsin 54-1255) (Penicillium chrysogenum)).